Here is a 503-residue protein sequence, read N- to C-terminus: MLEKLVDSLWKICRKSKFQHMTPIADAVDTFCFEPLHTPSSPPFVRDAVDVKRWMMLVVIALMPTIFAAVWNSGLQALVYQSSDPRIMEAFLHISGFKSYFSFVSQEIGIGSVLFAGCKIFLPLLFISYAVGGTCEVLFAIIRKHKIAEGLLVTGMLYPLILPPTIPYWMAALGIAFGVVMGKELFGGTGMNILNPALTGRAFLFFTFPAKMSGDVWVGSNPSRIKESLATMSSLAEKSHFDGFSQSTCLQVLNSTPPSVKRVHIDAIASNILNLEHVPTQDVLQTQFATWAESYPGLTVDQLSLEQLQNFVTTPITEGGLGLLPAHFDSACSLTEAVYGIGKFSTGNLFFGNILGSLGETSTVACLLGAGLLLLTGIASWRTMLSFGLSAFFFAWFFKIMSILTTGNAGAWAPAKFFIPAYRHLCIGGLAFGLVFMATDPVSSPAMKLAKWLYGAFIGFLTILIRLINPAYPEGVMLAILLGNVFAPLFDNIALKQYRQRRI.

The next 3 membrane-spanning stretches (helical) occupy residues 55-75, 120-142, and 160-180; these read MMLVVIALMPTIFAAVWNSGL, IFLPLLFISYAVGGTCEVLFAII, and LILPPTIPYWMAALGIAFGVV. Thr248 bears the FMN phosphoryl threonine mark. The next 5 membrane-spanning stretches (helical) occupy residues 361-381, 384-404, 417-437, 452-472, and 475-495; these read TSTVACLLGAGLLLLTGIASW, MLSFGLSAFFFAWFFKIMSIL, FFIPAYRHLCIGGLAFGLVFM, WLYGAFIGFLTILIRLINPAY, and GVMLAILLGNVFAPLFDNIAL.

This sequence belongs to the NqrB/RnfD family. In terms of assembly, composed of six subunits; NqrA, NqrB, NqrC, NqrD, NqrE and NqrF. It depends on FMN as a cofactor.

The protein localises to the cell inner membrane. It carries out the reaction a ubiquinone + n Na(+)(in) + NADH + H(+) = a ubiquinol + n Na(+)(out) + NAD(+). Functionally, NQR complex catalyzes the reduction of ubiquinone-1 to ubiquinol by two successive reactions, coupled with the transport of Na(+) ions from the cytoplasm to the periplasm. NqrA to NqrE are probably involved in the second step, the conversion of ubisemiquinone to ubiquinol. The polypeptide is Na(+)-translocating NADH-quinone reductase subunit B (Chlamydia trachomatis serovar A (strain ATCC VR-571B / DSM 19440 / HAR-13)).